Here is a 388-residue protein sequence, read N- to C-terminus: Succinate--CoA ligase [ADP-forming] subunit beta (388 aa).

An ATP-grasp domain is found at 9–244 (KQLFREYGLP…TTQDDEREMH (236 aa)). ATP is bound by residues K46, 53 to 55 (GRG), E99, S102, and E107. Residues N199 and D213 each coordinate Mg(2+). Substrate contacts are provided by residues N264 and 321–323 (GIV).

This sequence belongs to the succinate/malate CoA ligase beta subunit family. Heterotetramer of two alpha and two beta subunits. The cofactor is Mg(2+).

It carries out the reaction succinate + ATP + CoA = succinyl-CoA + ADP + phosphate. It catalyses the reaction GTP + succinate + CoA = succinyl-CoA + GDP + phosphate. It participates in carbohydrate metabolism; tricarboxylic acid cycle; succinate from succinyl-CoA (ligase route): step 1/1. Succinyl-CoA synthetase functions in the citric acid cycle (TCA), coupling the hydrolysis of succinyl-CoA to the synthesis of either ATP or GTP and thus represents the only step of substrate-level phosphorylation in the TCA. The beta subunit provides nucleotide specificity of the enzyme and binds the substrate succinate, while the binding sites for coenzyme A and phosphate are found in the alpha subunit. The protein is Succinate--CoA ligase [ADP-forming] subunit beta of Psychromonas ingrahamii (strain DSM 17664 / CCUG 51855 / 37).